A 114-amino-acid chain; its full sequence is uncharacterized protein (114 aa).

The protein to M.jannaschii MJ0310 and MJ0714.

This is an uncharacterized protein from Methanocaldococcus jannaschii (strain ATCC 43067 / DSM 2661 / JAL-1 / JCM 10045 / NBRC 100440) (Methanococcus jannaschii).